The sequence spans 397 residues: Nuclear RNA export factor 5 (397 aa).

An RRM domain is found at 13-92; that stretch reads WFKVTIPYGI…IFVSHFTAPY (80 aa). LRR repeat units lie at residues 160–185, 186–209, 210–237, and 238–265; these read ELLS…EKAP, KVKT…VKGL, KLEE…AIRD, and CFPK…ETMK. Residues 280-367 enclose the NTF2; truncated domain; that stretch reads LVLQFLQQSN…ESQRWWCLLS (88 aa).

It belongs to the NXF family. Interacts with NXT1 and NXT2.

The protein localises to the cytoplasm. It is found in the nucleus. Its function is as follows. Could be involved in the export of mRNA from the nucleus to the cytoplasm. Could also have a role in polarized cytoplasmic transport and localization of mRNA in neurons. The protein is Nuclear RNA export factor 5 (NXF5) of Homo sapiens (Human).